Reading from the N-terminus, the 247-residue chain is Small ribosomal subunit protein uS3 (247 aa).

One can recognise a KH type-2 domain in the interval 38–106 (IRDFLSEGLD…QVQLNILEVK (69 aa)). Residues 214 to 226 (SLMNARDERPSRG) show a composition bias toward basic and acidic residues. A disordered region spans residues 214-247 (SLMNARDERPSRGRRERPRRGGARRQRAEQKQEG). Basic residues predominate over residues 227–238 (RRERPRRGGARR).

The protein belongs to the universal ribosomal protein uS3 family. As to quaternary structure, part of the 30S ribosomal subunit. Forms a tight complex with proteins S10 and S14.

Binds the lower part of the 30S subunit head. Binds mRNA in the 70S ribosome, positioning it for translation. The chain is Small ribosomal subunit protein uS3 from Corynebacterium jeikeium (strain K411).